Here is a 1035-residue protein sequence, read N- to C-terminus: Eukaryotic translation initiation factor 3 subunit A (1035 aa).

Residues 92 to 121 (LKKFIELAEKKVTEAQAKADEIQSSLESAA) adopt a coiled-coil conformation. The 185-residue stretch at 339–523 (MTKAASFVLL…GVLTFDTDVF (185 aa)) folds into the PCI domain. The stretch at 606–910 (ERRVIIEKKK…LRAKRAGLSE (305 aa)) forms a coiled coil. Basic and acidic residues-rich tracts occupy residues 619 to 632 (TDAL…EETR) and 809 to 901 (KAAE…EARL). 2 disordered regions span residues 619–649 (TDAL…QRLA) and 809–1035 (KAAE…QQNQ). Composition is skewed to low complexity over residues 943–953 (KEAAGGAAPEA) and 988–1004 (PPSQ…QTPP).

This sequence belongs to the eIF-3 subunit A family. Component of the eukaryotic translation initiation factor 3 (eIF-3) complex.

The protein localises to the cytoplasm. RNA-binding component of the eukaryotic translation initiation factor 3 (eIF-3) complex, which is involved in protein synthesis of a specialized repertoire of mRNAs and, together with other initiation factors, stimulates binding of mRNA and methionyl-tRNAi to the 40S ribosome. The eIF-3 complex specifically targets and initiates translation of a subset of mRNAs involved in cell proliferation. The sequence is that of Eukaryotic translation initiation factor 3 subunit A (tif32) from Emericella nidulans (strain FGSC A4 / ATCC 38163 / CBS 112.46 / NRRL 194 / M139) (Aspergillus nidulans).